The following is a 408-amino-acid chain: Glycoprotein 55 (408 aa).

Residues 1–32 (MEGPAFSKPLKDKINPWGPLIILGILIRAGVS) form the signal peptide. The Virion surface segment spans residues 33-385 (VQHDSPHQVF…LFNRSTWFTT (353 aa)). 2 N-linked (GlcNAc...) asparagine; by host glycosylation sites follow: Asn-43 and Asn-58. The disordered stretch occupies residues 256 to 281 (RPPQPPPPGAASIVPETAPPSQQPGT). Residues Asn-297 and Asn-329 are each glycosylated (N-linked (GlcNAc...) asparagine; by host). Residues 335-371 (KEECCFYADHTGLVRDSMAKLRERLTQRQKLFESSQG) are a coiled coil. Asn-378 carries N-linked (GlcNAc...) asparagine; by host glycosylation. Residues 386 to 406 (LIFTIIGPLIILLLILLFWTL) form a helical membrane-spanning segment. Residues 407 to 408 (HS) are Intravirion-facing.

The protein resides in the host endoplasmic reticulum membrane. Its subcellular location is the host cell membrane. The protein localises to the virion membrane. Functionally, envelope-like membrane glycoprotein. The protein is Glycoprotein 55 (env) of Mus musculus (Mouse).